The sequence spans 80 residues: uncharacterized protein (80 aa).

This is an uncharacterized protein from Vaccinia virus (strain Copenhagen) (VACV).